Reading from the N-terminus, the 449-residue chain is Adenylosuccinate lyase (449 aa).

N(6)-(1,2-dicarboxyethyl)-AMP-binding positions include 9-10 (RY), 75-77 (KHD), and 102-103 (TS). The active-site Proton donor/acceptor is the His-150. Residue Gln-224 participates in N(6)-(1,2-dicarboxyethyl)-AMP binding. Residue Ser-275 is the Proton donor/acceptor of the active site. N(6)-(1,2-dicarboxyethyl)-AMP-binding positions include Ser-276, 281–283 (KMN), and 320–324 (SSERI).

This sequence belongs to the lyase 1 family. Adenylosuccinate lyase subfamily. As to quaternary structure, homotetramer. Residues from neighboring subunits contribute catalytic and substrate-binding residues to each active site.

It carries out the reaction N(6)-(1,2-dicarboxyethyl)-AMP = fumarate + AMP. It catalyses the reaction (2S)-2-[5-amino-1-(5-phospho-beta-D-ribosyl)imidazole-4-carboxamido]succinate = 5-amino-1-(5-phospho-beta-D-ribosyl)imidazole-4-carboxamide + fumarate. The protein operates within purine metabolism; AMP biosynthesis via de novo pathway; AMP from IMP: step 2/2. It functions in the pathway purine metabolism; IMP biosynthesis via de novo pathway; 5-amino-1-(5-phospho-D-ribosyl)imidazole-4-carboxamide from 5-amino-1-(5-phospho-D-ribosyl)imidazole-4-carboxylate: step 2/2. In terms of biological role, catalyzes two reactions in de novo purine nucleotide biosynthesis. Catalyzes the breakdown of 5-aminoimidazole- (N-succinylocarboxamide) ribotide (SAICAR or 2-[5-amino-1-(5-phospho-beta-D-ribosyl)imidazole-4-carboxamido]succinate) to 5-aminoimidazole-4-carboxamide ribotide (AICAR or 5-amino-1-(5-phospho-beta-D-ribosyl)imidazole-4-carboxamide) and fumarate, and of adenylosuccinate (ADS or N(6)-(1,2-dicarboxyethyl)-AMP) to adenosine monophosphate (AMP) and fumarate. This is Adenylosuccinate lyase (purB) from Methanothermobacter thermautotrophicus (strain ATCC 29096 / DSM 1053 / JCM 10044 / NBRC 100330 / Delta H) (Methanobacterium thermoautotrophicum).